We begin with the raw amino-acid sequence, 340 residues long: GTP 3',8-cyclase (340 aa).

Positions 20–246 (RFERQYVYLR…PKALSDGPAK (227 aa)) constitute a Radical SAM core domain. Arginine 29 serves as a coordination point for GTP. [4Fe-4S] cluster contacts are provided by cysteine 36 and cysteine 40. Tyrosine 42 is an S-adenosyl-L-methionine binding site. Cysteine 43 provides a ligand contact to [4Fe-4S] cluster. Arginine 79 contacts GTP. Glycine 83 provides a ligand contact to S-adenosyl-L-methionine. Threonine 110 contacts GTP. Serine 134 lines the S-adenosyl-L-methionine pocket. Residue lysine 171 coordinates GTP. Methionine 205 provides a ligand contact to S-adenosyl-L-methionine. [4Fe-4S] cluster contacts are provided by cysteine 268 and cysteine 271. Position 273–275 (273–275 (RLR)) interacts with GTP. [4Fe-4S] cluster is bound at residue cysteine 285.

It belongs to the radical SAM superfamily. MoaA family. As to quaternary structure, monomer and homodimer. Requires [4Fe-4S] cluster as cofactor.

It carries out the reaction GTP + AH2 + S-adenosyl-L-methionine = (8S)-3',8-cyclo-7,8-dihydroguanosine 5'-triphosphate + 5'-deoxyadenosine + L-methionine + A + H(+). It functions in the pathway cofactor biosynthesis; molybdopterin biosynthesis. In terms of biological role, catalyzes the cyclization of GTP to (8S)-3',8-cyclo-7,8-dihydroguanosine 5'-triphosphate. The sequence is that of GTP 3',8-cyclase from Actinobacillus pleuropneumoniae serotype 5b (strain L20).